The chain runs to 478 residues: Probable L-ascorbate peroxidase 8, chloroplastic (478 aa).

Residues 1–13 are compositionally biased toward low complexity; sequence MAERIAASLLPAA. Disordered stretches follow at residues 1–31 and 44–66; these read MAERIAASLLPAASPSPAPSPPPPRPRVSAA and GGLRLRSRPSRFPQKAATTRSGR. The transit peptide at 1 to 76 directs the protein to the chloroplast; that stretch reads MAERIAASLL…AGAGARAVVR (76 aa). A compositionally biased stretch (pro residues) spans 14 to 26; that stretch reads SPSPAPSPPPPRP. The Proton acceptor role is filled by His-117. The interval 245–276 is disordered; it reads AHTLGRSRPDRSGWGKPETKYTKDGPGEPGGQ. His-246 lines the heme b pocket. Thr-247 provides a ligand contact to K(+). Residues 251–270 show a composition bias toward basic and acidic residues; that stretch reads SRPDRSGWGKPETKYTKDGP. Residues Thr-279 and Asp-286 each contribute to the K(+) site. Positions 346 to 417 are disordered; sequence AKFDPPEGFS…DNNGAAPQPE (72 aa). Residues 369–381 are compositionally biased toward pro residues; sequence PAPAPAAAPPPPP. The segment covering 394–406 has biased composition (low complexity); sequence PVTVGAAVASSPA. The helical transmembrane segment at 458-478 threads the bilayer; sequence YFLNIMLLIGGLAFLTSLLGS.

It belongs to the peroxidase family. Ascorbate peroxidase subfamily. In terms of assembly, interacts with SWEET11/OS8N3. The cofactor is heme b. As to expression, expressed in roots, leaves, stems and flowers. Expressed in leaves, shoots and panicles. Expressed at low levels in roots.

It is found in the plastid. The protein resides in the chloroplast thylakoid membrane. It carries out the reaction L-ascorbate + H2O2 = L-dehydroascorbate + 2 H2O. In terms of biological role, involved in defense response and tolerance to the bacterial pathogen Xanthomonas oryzae pv. oryzae (Xoo). Plays an important role in hydrogen peroxide removal during infection by Xoo. Involved in response to abiotic stress. Plays a role in hydrogen peroxide removal durings salt stress. The chain is Probable L-ascorbate peroxidase 8, chloroplastic from Oryza sativa subsp. japonica (Rice).